We begin with the raw amino-acid sequence, 23 residues long: Phospholipase A2 homolog 4 (23 aa).

It belongs to the phospholipase A2 family. Group II subfamily. K49 sub-subfamily. As to quaternary structure, homodimer; non-covalently linked (probable alternative/compact dimer conformation in solution). Expressed by the venom gland.

The protein resides in the secreted. Functionally, snake venom phospholipase A2 homolog that lacks enzymatic activity. Induces acute muscle damage after intramuscular injection in mice and disrupts negatively charged liposomes but not positively charged ones. Also exerts a weak anticoagulant effect only at concentrations of 40 ug/ml or higher. A model of myotoxic mechanism has been proposed: an apo Lys49-PLA2 is activated by the entrance of a hydrophobic molecule (e.g. fatty acid) at the hydrophobic channel of the protein leading to a reorientation of a monomer. This reorientation causes a transition between 'inactive' to 'active' states, causing alignment of C-terminal and membrane-docking sites (MDoS) side-by-side and putting the membrane-disruption sites (MDiS) in the same plane, exposed to solvent and in a symmetric position for both monomers. The MDoS region stabilizes the toxin on membrane by the interaction of charged residues with phospholipid head groups. Subsequently, the MDiS region destabilizes the membrane with penetration of hydrophobic residues. This insertion causes a disorganization of the membrane, allowing an uncontrolled influx of ions (i.e. calcium and sodium), and eventually triggering irreversible intracellular alterations and cell death. This chain is Phospholipase A2 homolog 4, found in Bothrops asper (Terciopelo).